Reading from the N-terminus, the 100-residue chain is Integration host factor subunit alpha (100 aa).

The protein belongs to the bacterial histone-like protein family. Heterodimer of an alpha and a beta chain.

Functionally, this protein is one of the two subunits of integration host factor, a specific DNA-binding protein that functions in genetic recombination as well as in transcriptional and translational control. This is Integration host factor subunit alpha (ihfA) from Zymomonas mobilis subsp. mobilis (strain ATCC 31821 / ZM4 / CP4).